The following is a 31-amino-acid chain: Photosystem II reaction center protein T (31 aa).

A helical transmembrane segment spans residues 3–23 (SFAYVLILTLAIATLFFAIAF).

Belongs to the PsbT family. As to quaternary structure, PSII is composed of 1 copy each of membrane proteins PsbA, PsbB, PsbC, PsbD, PsbE, PsbF, PsbH, PsbI, PsbJ, PsbK, PsbL, PsbM, PsbT, PsbX, PsbY, PsbZ, Psb30/Ycf12, peripheral proteins PsbO, CyanoQ (PsbQ), PsbU, PsbV and a large number of cofactors. It forms dimeric complexes.

The protein localises to the cellular thylakoid membrane. In terms of biological role, found at the monomer-monomer interface of the photosystem II (PS II) dimer, plays a role in assembly and dimerization of PSII. PSII is a light-driven water plastoquinone oxidoreductase, using light energy to abstract electrons from H(2)O, generating a proton gradient subsequently used for ATP formation. This chain is Photosystem II reaction center protein T, found in Parasynechococcus marenigrum (strain WH8102).